A 220-amino-acid polypeptide reads, in one-letter code: Uracil-DNA glycosylase (220 aa).

D65 acts as the Proton acceptor in catalysis.

This sequence belongs to the uracil-DNA glycosylase (UDG) superfamily. UNG family.

The protein resides in the cytoplasm. The enzyme catalyses Hydrolyzes single-stranded DNA or mismatched double-stranded DNA and polynucleotides, releasing free uracil.. In terms of biological role, excises uracil residues from the DNA which can arise as a result of misincorporation of dUMP residues by DNA polymerase or due to deamination of cytosine. This chain is Uracil-DNA glycosylase, found in Amoebophilus asiaticus (strain 5a2).